A 151-amino-acid polypeptide reads, in one-letter code: Large ribosomal subunit protein uL13 (151 aa).

The interval 129 to 151 (PTHPHDAQKPKELNINTIPGAES) is disordered. Positions 131-140 (HPHDAQKPKE) are enriched in basic and acidic residues.

Belongs to the universal ribosomal protein uL13 family. Part of the 50S ribosomal subunit.

This protein is one of the early assembly proteins of the 50S ribosomal subunit, although it is not seen to bind rRNA by itself. It is important during the early stages of 50S assembly. The protein is Large ribosomal subunit protein uL13 of Trichormus variabilis (strain ATCC 29413 / PCC 7937) (Anabaena variabilis).